The following is a 458-amino-acid chain: UDP-N-acetylmuramoylalanine--D-glutamate ligase (458 aa).

ATP is bound at residue 124-130; that stretch reads GSDGKTT.

The protein belongs to the MurCDEF family.

The protein resides in the cytoplasm. It catalyses the reaction UDP-N-acetyl-alpha-D-muramoyl-L-alanine + D-glutamate + ATP = UDP-N-acetyl-alpha-D-muramoyl-L-alanyl-D-glutamate + ADP + phosphate + H(+). It functions in the pathway cell wall biogenesis; peptidoglycan biosynthesis. In terms of biological role, cell wall formation. Catalyzes the addition of glutamate to the nucleotide precursor UDP-N-acetylmuramoyl-L-alanine (UMA). This Clostridium botulinum (strain Loch Maree / Type A3) protein is UDP-N-acetylmuramoylalanine--D-glutamate ligase.